Here is a 424-residue protein sequence, read N- to C-terminus: UDP-N-acetylglucosamine 1-carboxyvinyltransferase (424 aa).

Residue 22-23 (KN) participates in phosphoenolpyruvate binding. UDP-N-acetyl-alpha-D-glucosamine is bound at residue Arg93. Cys117 serves as the catalytic Proton donor. Position 117 is a 2-(S-cysteinyl)pyruvic acid O-phosphothioketal (Cys117). Residues 162-165 (KVSV), Asp307, and Ile329 each bind UDP-N-acetyl-alpha-D-glucosamine.

It belongs to the EPSP synthase family. MurA subfamily.

It is found in the cytoplasm. It carries out the reaction phosphoenolpyruvate + UDP-N-acetyl-alpha-D-glucosamine = UDP-N-acetyl-3-O-(1-carboxyvinyl)-alpha-D-glucosamine + phosphate. It functions in the pathway cell wall biogenesis; peptidoglycan biosynthesis. Cell wall formation. Adds enolpyruvyl to UDP-N-acetylglucosamine. The protein is UDP-N-acetylglucosamine 1-carboxyvinyltransferase of Glaesserella parasuis serovar 5 (strain SH0165) (Haemophilus parasuis).